Consider the following 465-residue polypeptide: uncharacterized protein (465 aa).

Residues 87–112 (KTSQQIDSSPPQTPTTSNGSMMTRRQ) are compositionally biased toward polar residues. Disordered regions lie at residues 87–169 (KTSQ…SYDD) and 201–244 (EGYI…NNIF). Residues 113–139 (NANNAISSNNNTNTNVTNGSSSNTSLN) are compositionally biased toward low complexity. Over residues 141–157 (GDEEQEEEEEEENDEDS) the composition is skewed to acidic residues. Positions 217–244 (NRNNNNNNINKNNNNNINNNNNNNNNIF) are enriched in low complexity.

This is an uncharacterized protein from Dictyostelium discoideum (Social amoeba).